Reading from the N-terminus, the 470-residue chain is Desmin (470 aa).

The interval 2–108 is head; that stretch reads SQAYSSSQRV…QEFLTTRTNE (107 aa). Ser-7 carries the post-translational modification Phosphoserine; by CDK1. A Phosphoserine; by AURKB modification is found at Ser-12. The residue at position 16 (Arg-16) is an Omega-N-methylarginine. Thr-17 bears the Phosphothreonine; by AURKB and ROCK1 mark. Position 28 is a phosphoserine; by CDK1 (Ser-28). Ser-31 carries the post-translational modification Phosphoserine. Ser-32 carries the phosphoserine; by CDK1 modification. Arg-37 is modified (asymmetric dimethylarginine; alternate). An Omega-N-methylarginine; alternate modification is found at Arg-37. Residue Ser-45 is modified to Phosphoserine. The residue at position 58 (Arg-58) is an ADP-ribosylarginine. Position 60 is a phosphoserine; by AURKB (Ser-60). Arg-70 carries the omega-N-methylarginine modification. Thr-77 bears the Phosphothreonine; by ROCK1 mark. The residue at position 81 (Ser-81) is a Phosphoserine. The IF rod domain occupies 108 to 416; that stretch reads EKVELQELND…KLLEGEESRI (309 aa). Residues 109-141 form a coil 1A region; that stretch reads KVELQELNDRFANYIEKVRFLEQQNAALAAEVN. The interval 142 to 151 is linker 1; that stretch reads RLKGREPTRV. The coil 1B stretch occupies residues 152-252; that stretch reads AEIYEEELRE…HEEEIRELQA (101 aa). Positions 253–268 are linker 12; the sequence is QLQEQQVQVEMDMSKP. Residues 268–415 form an interaction with NEB region; the sequence is PDLTAALRDI…RKLLEGEESR (148 aa). The coil 2A stretch occupies residues 269-287; sequence DLTAALRDIRAQYETIAAK. The linker 2 stretch occupies residues 288–295; it reads NISEAEEW. Ser-290, Ser-358, Ser-361, and Ser-424 each carry phosphoserine. The tract at residues 296 to 412 is coil 2B; sequence YKSKVSDLTQ…ATYRKLLEGE (117 aa). Positions 413 to 470 are tail; that stretch reads ESRINLPIQTFSALNFRETSPEQRGSEVHTKKTVMIKTIETRDGEVVSEATQQQHEVL. The interaction with CRYAB stretch occupies residues 438–453; that stretch reads SEVHTKKTVMIKTIET.

It belongs to the intermediate filament family. Homomer. Interacts with DST. Interacts with MTM1. Interacts with EPPK1; interaction is dependent of higher-order structure of intermediate filament. Interacts with CRYAB. Interacts with NEB (via nebulin repeats 160-164). Interacts (via rod region) with NEBL (via nebulin repeats 1-5). Interacts with ASB2; the interaction targets DES for proteasomal degradation. Interacts with PKP1. Interacts with FLII. ADP-ribosylation prevents ability to form intermediate filaments. In terms of processing, phosphorylation at Ser-7, Ser-28 and Ser-32 by CDK1 and phosphorylation at Ser-60 by AURKB contribute to efficient separation of desmin intermediate filaments during mitosis. Post-translationally, ubiquitination by a SCF-like complex containing ASB2 leads to proteasomal degradation.

The protein resides in the cytoplasm. It is found in the myofibril. It localises to the sarcomere. Its subcellular location is the z line. The protein localises to the cell membrane. The protein resides in the sarcolemma. It is found in the nucleus. It localises to the cell tip. Its subcellular location is the nucleus envelope. Its function is as follows. Muscle-specific type III intermediate filament essential for proper muscular structure and function. Plays a crucial role in maintaining the structure of sarcomeres, inter-connecting the Z-disks and forming the myofibrils, linking them not only to the sarcolemmal cytoskeleton, but also to the nucleus and mitochondria, thus providing strength for the muscle fiber during activity. In adult striated muscle they form a fibrous network connecting myofibrils to each other and to the plasma membrane from the periphery of the Z-line structures. May act as a sarcomeric microtubule-anchoring protein: specifically associates with detyrosinated tubulin-alpha chains, leading to buckled microtubules and mechanical resistance to contraction. Required for nuclear membrane integrity, via anchoring at the cell tip and nuclear envelope, resulting in maintenance of microtubule-derived intracellular mechanical forces. Contributes to the transcriptional regulation of the NKX2-5 gene in cardiac progenitor cells during a short period of cardiomyogenesis and in cardiac side population stem cells in the adult. Plays a role in maintaining an optimal conformation of nebulette (NEB) on heart muscle sarcomeres to bind and recruit cardiac alpha-actin. This Bos taurus (Bovine) protein is Desmin (DES).